A 261-amino-acid polypeptide reads, in one-letter code: Transmembrane and immunoglobulin domain-containing protein 1 (261 aa).

An N-terminal signal peptide occupies residues 1–26 (MVWKITGPLQACQLLLVVLSLPQGRT). The Ig-like C2-type 1 domain maps to 27–113 (SSVLTVNGRT…LQRDQTVSVT (87 aa)). The Extracellular portion of the chain corresponds to 27–215 (SSVLTVNGRT…DFHLLVKDKV (189 aa)). Residues C53 and C102 are joined by a disulfide bond. N57, N82, N92, N117, N157, and N189 each carry an N-linked (GlcNAc...) asparagine glycan. The 86-residue stretch at 121-206 (PPLLSGNGFQ…SSSLKMETMD (86 aa)) folds into the Ig-like C2-type 2 domain. C142 and C194 are joined by a disulfide. A helical transmembrane segment spans residues 216-236 (FVMPAEPIIAACVVVVLTMAF). Topologically, residues 237–261 (ALFSRRKRIMKLCGKKNDPNSETAL) are cytoplasmic.

Homodimer. In terms of processing, N-glycosylated.

It is found in the cell membrane. The protein resides in the cytoplasm. May control cell-cell adhesion, cell migration and proliferation, cell morphology, and protects renal epithelial cells from oxidative cell injury to promote cell survival. The chain is Transmembrane and immunoglobulin domain-containing protein 1 from Mus musculus (Mouse).